The chain runs to 361 residues: Feruloyl CoA ortho-hydroxylase 1 (361 aa).

In terms of domain architecture, Fe2OG dioxygenase spans 204–312 (TKESLFMGSI…RISVPIFVNP (109 aa)). Tyr220 lines the 2-oxoglutarate pocket. His235, Asp237, and His293 together coordinate Fe cation. 2-oxoglutarate is bound by residues Arg303 and Ser305.

It belongs to the iron/ascorbate-dependent oxidoreductase family. Requires L-ascorbate as cofactor. Fe(2+) is required as a cofactor. Highly expressed in roots, especially in the cortex.

The catalysed reaction is (E)-feruloyl-CoA + 2-oxoglutarate + O2 = (E)-6-hydroxyferuloyl-CoA + succinate + CO2. It catalyses the reaction (E)-6-hydroxyferuloyl-CoA = scopoletin + CoA. It functions in the pathway phenylpropanoid metabolism. Its function is as follows. 2-oxoglutarate (OG)- and Fe(II)-dependent dioxygenase (2OGD) involved in scopoletin biosynthesis. Converts feruloyl CoA into 6'-hydroxyferuloyl CoA but has no activity with ferulic acid, feruloylquinic acid, caffeic acid, caffeoyl CoA, p-coumaric acid, cinnamic acid, cinnamoyl CoA or benzoyl CoA. Required for the production and secretion of compounds (e.g. fluorescent coumarins) that facilitate the mobilization and uptake of iron from sources with low bioavailability or in high pH-induced iron deficiency conditions. Involved in the pathway of sideretin biosynthesis from feruloyl CoA, a redox-active catecholic metabolite exuded by roots in response to iron deficiency in order to facilitate the uptake of iron; this pathway consists in the successive conversion from feruloyl CoA to scopoletin, from scopoletin to fraxetin and from fraxetin to sideretin. Catalyzes the biosynthesis of scopoletin from feruloyl CoA. The protein is Feruloyl CoA ortho-hydroxylase 1 of Arabidopsis thaliana (Mouse-ear cress).